Here is a 553-residue protein sequence, read N- to C-terminus: Effector protein HopAB2 (553 aa).

Disordered stretches follow at residues 1 to 123 (MAGI…APRR), 198 to 227 (AVHQQAASAPVRSPTPTPASPAASSSGSSQ), and 239 to 275 (APNQGRSSNTAASQTPVDRSPPRVNQRPIRVDRAAMR). Positions 1–308 (MAGINRAGPS…LRTALERHVM (308 aa)) are host recognition; Pto interaction. Low complexity predominate over residues 24-39 (SGQAHGSGSGASSSNS). Residues 47 to 60 (SNTPPSNAPAPPPT) show a composition bias toward pro residues. The segment covering 217 to 227 (SPAASSSGSSQ) has biased composition (low complexity). The span at 242 to 255 (QGRSSNTAASQTPV) shows a compositional bias: polar residues. The E3 ubiquitin-protein ligase stretch occupies residues 309–553 (QRLPIPLDIG…IAKYAFRIVP (245 aa)). The Interaction with Pto-kinase motif lies at 325–328 (GINP). The segment at 361–380 (APRPAVPVAPATASRRPDGT) is disordered. The interval 512-529 (KDLAFMDMKKLAQFLAGK) is required for E3 ubiquitin-protein ligase and anti-PCD activities and pathogenesis.

Belongs to the HopAB family. In terms of assembly, interacts physically with plant cell Pto. Post-translationally, auto-ubiquitinated.

It is found in the secreted. Functionally, effector protein involved in gene-for-gene resistance in tomato plants. It is recognized by the host Pto resistance protein and elicits Pto and Prf-dependent hypersensitive response (HR) and programmed cell death (PCD), resulting in host immunity. In susceptible plants, acts as a virulence factor by suppressing PCD and HR-based plant immunity. This function requires its E3 ubiquitin ligase activity probably by recruiting E2 enzymes and transferring ubiquitin molecules to cellular proteins involved in regulation of PCD and targeting them for degradation. Also, induces expression of host genes involved in ethylene biosynthesis and signaling, in particular ACO1 and ACO2, encoding the ethylene-forming enzyme ACC oxidase. The protein is Effector protein HopAB2 (hopAB2) of Pseudomonas syringae pv. tomato (strain ATCC BAA-871 / DC3000).